We begin with the raw amino-acid sequence, 239 residues long: Uridylate kinase (239 aa).

10 to 13 provides a ligand contact to ATP; sequence KFSG. Residues 18 to 23 form an involved in allosteric activation by GTP region; sequence GENGFG. Residue Gly-52 participates in UMP binding. ATP is bound by residues Gly-53 and Arg-57. Residues Asp-73 and 134 to 141 contribute to the UMP site; that span reads TGNPYFTT. ATP contacts are provided by Thr-161, Tyr-167, and Asp-170.

It belongs to the UMP kinase family. In terms of assembly, homohexamer.

Its subcellular location is the cytoplasm. It carries out the reaction UMP + ATP = UDP + ADP. It functions in the pathway pyrimidine metabolism; CTP biosynthesis via de novo pathway; UDP from UMP (UMPK route): step 1/1. Its activity is regulated as follows. Allosterically activated by GTP. Inhibited by UTP. Functionally, catalyzes the reversible phosphorylation of UMP to UDP. The protein is Uridylate kinase of Campylobacter jejuni subsp. jejuni serotype O:2 (strain ATCC 700819 / NCTC 11168).